We begin with the raw amino-acid sequence, 618 residues long: DNA ligase 2 (618 aa).

The segment covering 197 to 208 has biased composition (basic and acidic residues); the sequence is DKKTLESREDAK. Residues 197–250 form a disordered region; that stretch reads DKKTLESREDAKSVPPASQPEITNKISGDTSPNTSESVQTKKSDPDTSSNVDPS. Polar residues predominate over residues 216 to 234; that stretch reads PEITNKISGDTSPNTSESV. ATP is bound at residue E312. K314 acts as the N6-AMP-lysine intermediate in catalysis. Residues R319, R334, E363, F403, R476, and K482 each contribute to the ATP site. The interval 459 to 480 is disordered; it reads HEGVMLKDPDSTYNPGSRGQHW.

This sequence belongs to the ATP-dependent DNA ligase family. The cofactor is Mg(2+).

It carries out the reaction ATP + (deoxyribonucleotide)n-3'-hydroxyl + 5'-phospho-(deoxyribonucleotide)m = (deoxyribonucleotide)n+m + AMP + diphosphate.. In terms of biological role, DNA ligase that seals nicks in double-stranded DNA during DNA replication, DNA recombination and DNA repair. The sequence is that of DNA ligase 2 from Haloquadratum walsbyi (strain DSM 16790 / HBSQ001).